Here is a 198-residue protein sequence, read N- to C-terminus: Na(+)-translocating NADH-quinone reductase subunit E (198 aa).

The next 6 membrane-spanning stretches (helical) occupy residues 11-31 (AVFV…FLAV), 35-55 (VSTA…AVPI), 77-97 (FLNF…LEMI), 110-130 (GIFL…SFMV), 140-160 (IVYG…MAGI), and 176-196 (LGIT…FSGV).

The protein belongs to the NqrDE/RnfAE family. As to quaternary structure, composed of six subunits; NqrA, NqrB, NqrC, NqrD, NqrE and NqrF.

The protein localises to the cell inner membrane. The enzyme catalyses a ubiquinone + n Na(+)(in) + NADH + H(+) = a ubiquinol + n Na(+)(out) + NAD(+). Functionally, NQR complex catalyzes the reduction of ubiquinone-1 to ubiquinol by two successive reactions, coupled with the transport of Na(+) ions from the cytoplasm to the periplasm. NqrA to NqrE are probably involved in the second step, the conversion of ubisemiquinone to ubiquinol. This Klebsiella pneumoniae subsp. pneumoniae (strain ATCC 700721 / MGH 78578) protein is Na(+)-translocating NADH-quinone reductase subunit E.